Reading from the N-terminus, the 152-residue chain is Protein-export protein SecB (152 aa).

This sequence belongs to the SecB family. Homotetramer, a dimer of dimers. One homotetramer interacts with 1 SecA dimer.

Its subcellular location is the cytoplasm. Its function is as follows. One of the proteins required for the normal export of preproteins out of the cell cytoplasm. It is a molecular chaperone that binds to a subset of precursor proteins, maintaining them in a translocation-competent state. It also specifically binds to its receptor SecA. This is Protein-export protein SecB from Rickettsia africae (strain ESF-5).